The following is a 523-amino-acid chain: UDP-N-acetylmuramyl-tripeptide synthetase (523 aa).

S38 contributes to the UDP-N-acetyl-alpha-D-muramoyl-L-alanyl-D-glutamate binding site. Residue 116–122 (GTKGKTT) participates in ATP binding. Residues 162–163 (TT), S189, and R197 each bind UDP-N-acetyl-alpha-D-muramoyl-L-alanyl-D-glutamate. K231 bears the N6-carboxylysine mark.

This sequence belongs to the MurCDEF family. MurE subfamily. Post-translationally, carboxylation is probably crucial for Mg(2+) binding and, consequently, for the gamma-phosphate positioning of ATP.

Its subcellular location is the cytoplasm. It participates in cell wall biogenesis; peptidoglycan biosynthesis. Functionally, catalyzes the addition of an amino acid to the nucleotide precursor UDP-N-acetylmuramoyl-L-alanyl-D-glutamate (UMAG) in the biosynthesis of bacterial cell-wall peptidoglycan. The polypeptide is UDP-N-acetylmuramyl-tripeptide synthetase (Lactobacillus acidophilus (strain ATCC 700396 / NCK56 / N2 / NCFM)).